Consider the following 876-residue polypeptide: Alanine--tRNA ligase (876 aa).

The Zn(2+) site is built by H565, H569, C667, and H671.

This sequence belongs to the class-II aminoacyl-tRNA synthetase family. Requires Zn(2+) as cofactor.

It localises to the cytoplasm. It catalyses the reaction tRNA(Ala) + L-alanine + ATP = L-alanyl-tRNA(Ala) + AMP + diphosphate. Catalyzes the attachment of alanine to tRNA(Ala) in a two-step reaction: alanine is first activated by ATP to form Ala-AMP and then transferred to the acceptor end of tRNA(Ala). Also edits incorrectly charged Ser-tRNA(Ala) and Gly-tRNA(Ala) via its editing domain. This is Alanine--tRNA ligase from Staphylococcus epidermidis (strain ATCC 35984 / DSM 28319 / BCRC 17069 / CCUG 31568 / BM 3577 / RP62A).